The following is a 340-amino-acid chain: Tryptophan--tRNA ligase (340 aa).

Residues 11-13 and 19-20 contribute to the ATP site; these read RPT and GH. The 'HIGH' region motif lies at 12–20; sequence PTGKLHLGH. Aspartate 140 is an L-tryptophan binding site. ATP-binding positions include 152–154, leucine 194, and 202–206; these read GND and KMSKS. Residues 202 to 206 carry the 'KMSKS' region motif; it reads KMSKS.

The protein belongs to the class-I aminoacyl-tRNA synthetase family. As to quaternary structure, homodimer.

The protein localises to the cytoplasm. The enzyme catalyses tRNA(Trp) + L-tryptophan + ATP = L-tryptophyl-tRNA(Trp) + AMP + diphosphate + H(+). Its function is as follows. Catalyzes the attachment of tryptophan to tRNA(Trp). In Streptococcus pyogenes serotype M3 (strain ATCC BAA-595 / MGAS315), this protein is Tryptophan--tRNA ligase.